The chain runs to 921 residues: Probable glucan 1,3-alpha-glucosidase (921 aa).

Residues 1–20 (MRSLLFVLSLICFCSQTALS) form the signal peptide. Asp-512 (nucleophile) is an active-site residue. Glu-515 is a catalytic residue. Asp-588 acts as the Proton donor in catalysis. Residues Asn-689 and Asn-804 are each glycosylated (N-linked (GlcNAc...) asparagine).

Belongs to the glycosyl hydrolase 31 family. In terms of assembly, heterodimer of a catalytic alpha subunit (PSL5) and a beta subunit (PSL4). Expressed in roots, rosette leaves, leaf blades, mature stems, cauline leaves, flower buds, flowers and siliques.

The protein resides in the endoplasmic reticulum. It catalyses the reaction Hydrolysis of terminal (1-&gt;3)-alpha-D-glucosidic links in (1-&gt;3)-alpha-D-glucans.. It participates in glycan metabolism; N-glycan metabolism. Functionally, cleaves sequentially the 2 innermost alpha-1,3-linked glucose residues from the Glc(2)Man(9)GlcNAc(2) oligosaccharide precursor of immature glycoproteins. Essential for stable accumulation of the receptor EFR that determines the specific perception of bacterial elongation factor Tu (EF-Tu), a potent elicitor of the defense response to pathogen-associated molecular patterns (PAMPs). Required for sustained activation of EFR-mediated signaling, but not receptor FLS2-mediated signaling elicited by the bacterial flagellin flg22. The polypeptide is Probable glucan 1,3-alpha-glucosidase (PSL5) (Arabidopsis thaliana (Mouse-ear cress)).